A 601-amino-acid chain; its full sequence is Zinc finger CCCH domain-containing protein 33 (601 aa).

ANK repeat units follow at residues Glu71–Arg101 and Asp106–Ala138. Residues Pro167–Ser180 show a composition bias toward low complexity. The segment at Pro167–Leu203 is disordered. C3H1-type zinc fingers lie at residues Ser252–Phe280 and Gln288–Asp312.

This Oryza sativa subsp. japonica (Rice) protein is Zinc finger CCCH domain-containing protein 33.